Consider the following 236-residue polypeptide: L-aspartate dehydrogenase (236 aa).

Residues 10 to 11 (AI), D31, 58 to 59 (AS), Y66, 80 to 81 (LS), A111, and N162 each bind NAD(+). H189 is a catalytic residue. 212 to 215 (NPKT) provides a ligand contact to NAD(+).

The protein belongs to the L-aspartate dehydrogenase family. In terms of assembly, homodimer.

The enzyme catalyses L-aspartate + NADP(+) + H2O = oxaloacetate + NH4(+) + NADPH + H(+). The catalysed reaction is L-aspartate + NAD(+) + H2O = oxaloacetate + NH4(+) + NADH + H(+). It participates in cofactor biosynthesis; NAD(+) biosynthesis; iminoaspartate from L-aspartate (dehydrogenase route): step 1/1. Its function is as follows. Specifically catalyzes the NAD or NADP-dependent dehydrogenation of L-aspartate to iminoaspartate. The sequence is that of L-aspartate dehydrogenase from Archaeoglobus fulgidus (strain ATCC 49558 / DSM 4304 / JCM 9628 / NBRC 100126 / VC-16).